A 316-amino-acid chain; its full sequence is uncharacterized protein (316 aa).

This sequence to yeast YGR277c.

This is an uncharacterized protein from Schizosaccharomyces pombe (strain 972 / ATCC 24843) (Fission yeast).